We begin with the raw amino-acid sequence, 1269 residues long: Protein flightless-1 homolog (1269 aa).

Met1 carries the post-translational modification N-acetylmethionine. The interaction with LRRFIP1 and LRRFIP2 stretch occupies residues 1–427; that stretch reads MEATGVLPFV…SGPKDPMARK (427 aa). LRR repeat units follow at residues 7–32, 33–55, 56–78, 80–103, 104–126, 127–149, 150–173, 175–196, 197–222, 223–245, 247–268, 269–291, 293–316, 318–339, 340–363, and 365–385; these read LPFV…VKAM, TSLR…LAAL, QKLE…LSSL, SLRA…IFKL, DDLS…LENA, KNML…LFIN, LTDL…MRRL, HLQT…QLPA, MTAL…LEGL, SNLA…LYTL, SLRR…IDQW, VHVE…ICKL, KLKK…IGKL, NLEE…LCRC, PKLR…HFLT, and IEVL…PADR. The residue at position 21 (Lys21) is an N6-acetyllysine. Ser406 is subject to Phosphoserine. Ser436 bears the Phosphoserine; by SGK3 mark. The segment at 452 to 473 is disordered; it reads VAQEKNKKQEESADARAPSGKV. Positions 453-465 are enriched in basic and acidic residues; sequence AQEKNKKQEESAD. An interaction with ACTL6A region spans residues 495 to 827; the sequence is VGQLPGLTIW…TVSRSLEGTE (333 aa). Gelsolin-like repeat units lie at residues 509–591, 629–703, and 758–831; these read FVPV…EEFL, NIKL…PEFW, and ELMP…AQVF. Thr818 carries the phosphothreonine; by SGK3 modification. 2 positions are modified to phosphoserine: Ser856 and Ser860. The interval 951 to 975 is disordered; the sequence is KKEDKEEKAEGKEGEEATAEAEEKQ. Positions 952–965 are enriched in basic and acidic residues; it reads KEDKEEKAEGKEGE. Over residues 966-975 the composition is skewed to acidic residues; it reads EATAEAEEKQ. Gelsolin-like repeat units lie at residues 1075–1143 and 1181–1254; these read TDSS…PENF and KCSD…QHAF.

As to quaternary structure, interacts with actin, ACTL6A, NCOA2 and CARM1. Interacts with LRRFIP1, LRRFIP2 and MYD88. Upon LPS stimulation, LRRFIP2 competes for MYD88-binding. LRRFIP1 constitutively blocks the interaction with MyD88, even in the absence of LPS. Interacts with the nuclear receptors ESR1 and THRB. Interacts with SGK3. Interacts (via the gelsolin-like region) with TMOD1. Interacts with (via the gelsolin-like region) TMOD3. Interacts with LMOD2, VCL, GSN and DES. As to expression, strongest expression in skeletal muscle with high expression also in the heart and lung.

It localises to the nucleus. It is found in the cytoplasm. The protein localises to the cytoskeleton. Its subcellular location is the microtubule organizing center. The protein resides in the centrosome. It localises to the cell projection. It is found in the podosome. The protein localises to the cell junction. Its subcellular location is the focal adhesion. In terms of biological role, is a regulator of actin polymerization, required for proper myofibril organization and regulation of the length of sarcomeric thin filaments. It also plays a role in the assembly of cardiomyocyte cell adhesion complexes. Regulates cytoskeletal rearrangements involved in cytokinesis and cell migration, by inhibiting Rac1-dependent paxillin phosphorylation. May play a role as coactivator in transcriptional activation by hormone-activated nuclear receptors (NR) and acts in cooperation with NCOA2 and CARM1. Involved in estrogen hormone signaling. This is Protein flightless-1 homolog (FLII) from Homo sapiens (Human).